A 747-amino-acid chain; its full sequence is Pentatricopeptide repeat-containing protein At5g39710 (747 aa).

PPR repeat units lie at residues 133 to 167, 168 to 203, 204 to 238, 239 to 273, 274 to 308, 309 to 343, 344 to 378, 379 to 413, 414 to 448, 449 to 483, 484 to 518, 519 to 553, 554 to 588, 604 to 638, and 639 to 673; these read TSSVFDLVVKSYSRLSLIDKALSIVHLAQAHGFMP, GVLSYNAVLDATIRSKRNISFAENVFKEMLESQVSP, NVFTYNILIRGFCFAGNIDVALTLFDKMETKGCLP, NVVTYNTLIDGYCKLRKIDDGFKLLRSMALKGLEP, NLISYNVVINGLCREGRMKEVSFVLTEMNRRGYSL, DEVTYNTLIKGYCKEGNFHQALVMHAEMLRHGLTP, SVITYTSLIHSMCKAGNMNRAMEFLDQMRVRGLCP, NERTYTTLVDGFSQKGYMNEAYRVLREMNDNGFSP, SVVTYNALINGHCVTGKMEDAIAVLEDMKEKGLSP, DVVSYSTVLSGFCRSYDVDEALRVKREMVEKGIKP, DTITYSSLIQGFCEQRRTKEACDLYEEMLRVGLPP, DEFTYTALINAYCMEGDLEKALQLHNEMVEKGVLP, DVVTYSVLINGLNKQSRTREAKRLLLKLFYEESVP, EFKSVVSLIKGFCMKGMMTEADQVFESMLGKNHKP, and DGTAYNIMIHGHCRAGDIRKAYTLYKEMVKSGFLL.

It belongs to the PPR family. P subfamily.

This Arabidopsis thaliana (Mouse-ear cress) protein is Pentatricopeptide repeat-containing protein At5g39710 (EMB2745).